The following is a 307-amino-acid chain: NAD kinase (307 aa).

Residue Asp-85 is the Proton acceptor of the active site. NAD(+) is bound by residues 85-86 (DG), Arg-90, 159-160 (NE), Asp-189, and 200-205 (TAYAFS).

It belongs to the NAD kinase family. A divalent metal cation is required as a cofactor.

The protein localises to the cytoplasm. The enzyme catalyses NAD(+) + ATP = ADP + NADP(+) + H(+). Its function is as follows. Involved in the regulation of the intracellular balance of NAD and NADP, and is a key enzyme in the biosynthesis of NADP. Catalyzes specifically the phosphorylation on 2'-hydroxyl of the adenosine moiety of NAD to yield NADP. This is NAD kinase from Mycobacterium bovis (strain ATCC BAA-935 / AF2122/97).